Reading from the N-terminus, the 341-residue chain is Phosphoribosylformylglycinamidine cyclo-ligase (341 aa).

Belongs to the AIR synthase family.

Its subcellular location is the cytoplasm. It catalyses the reaction 2-formamido-N(1)-(5-O-phospho-beta-D-ribosyl)acetamidine + ATP = 5-amino-1-(5-phospho-beta-D-ribosyl)imidazole + ADP + phosphate + H(+). It functions in the pathway purine metabolism; IMP biosynthesis via de novo pathway; 5-amino-1-(5-phospho-D-ribosyl)imidazole from N(2)-formyl-N(1)-(5-phospho-D-ribosyl)glycinamide: step 2/2. This chain is Phosphoribosylformylglycinamidine cyclo-ligase, found in Picosynechococcus sp. (strain ATCC 27264 / PCC 7002 / PR-6) (Agmenellum quadruplicatum).